We begin with the raw amino-acid sequence, 161 residues long: DNA-directed RNA polymerase III subunit RPC9 (161 aa).

The segment at 75-96 (QEDEGEERESSGAKDAEKSGIS) is disordered. Residues 82-96 (RESSGAKDAEKSGIS) show a composition bias toward basic and acidic residues.

It belongs to the eukaryotic RPC9 RNA polymerase subunit family. As to quaternary structure, component of the RNA polymerase III (Pol III) complex consisting of 17 subunits. Forms a Pol III subcomplex with RPC25/RPC8. Interacts with BURF1/TDS4.

It localises to the nucleus. DNA-dependent RNA polymerase catalyzes the transcription of DNA into RNA using the four ribonucleoside triphosphates as substrates. Specific peripheric component of RNA polymerase III which synthesizes small RNAs, such as 5S rRNA and tRNAs. The RPC25/RPC8-RPC17/RPC9 subcomplex may bind Pol III transcripts emerging from the adjacent exit pore during elongation. The protein is DNA-directed RNA polymerase III subunit RPC9 (RPC17) of Saccharomyces cerevisiae (strain ATCC 204508 / S288c) (Baker's yeast).